The sequence spans 1080 residues: Putative bifunctional amine oxidase DDB_G0291301 (1080 aa).

The tract at residues 1-450 is putative sarcosine oxidase; the sequence is MREFLKDDYD…TIAKSTVPTN (450 aa). 10-40 serves as a coordination point for FAD; it reads DVIVCGGGPVGLATAYRCAKAGKKVLCLEKS. Residues 445–464 form a disordered region; it reads STVPTNQSSNPDGASSTAPT. Positions 450-1080 are putative L-amino-acid oxidase; sequence NQSSNPDGAS…NTAASIGGLK (631 aa). Residues 508–528 traverse the membrane as a helical segment; it reads VGIIGAGMAGLYAAMILQDLG. Residues Glu535, Arg544, and 563–564 contribute to the FAD site; that span reads GA. Tyr886 serves as a coordination point for substrate. Residues Glu978 and 987-990 each bind FAD; that span reads VIGS.

In the N-terminal section; belongs to the MSOX/MTOX family. It in the C-terminal section; belongs to the flavin monoamine oxidase family. The cofactor is FAD.

The protein localises to the membrane. It carries out the reaction sarcosine + O2 + H2O = formaldehyde + glycine + H2O2. The enzyme catalyses L-pipecolate + O2 = L-1-piperideine-6-carboxylate + H2O2 + H(+). The catalysed reaction is an L-alpha-amino acid + O2 + H2O = a 2-oxocarboxylate + H2O2 + NH4(+). Functionally, catalyzes an oxidative deamination of predominantly hydrophobic and aromatic L-amino acids. Metabolizes sarcosine, L-pipecolic acid and L-proline. The polypeptide is Putative bifunctional amine oxidase DDB_G0291301 (Dictyostelium discoideum (Social amoeba)).